The primary structure comprises 614 residues: FAD-dependent monooxygenase terD (614 aa).

A signal peptide spans 1 to 23 (MSSKFDVVICGSGTAGLAAATWL). Residues 6-35 (DVVI…ILES), Q44, V137, and 239-241 (RVY) each bind FAD. N-linked (GlcNAc...) asparagine glycosylation occurs at N260. Residues Y282 and D303 each coordinate FAD. N-linked (GlcNAc...) asparagine glycosylation is present at N317. Residue S319 coordinates FAD. N-linked (GlcNAc...) asparagine glycosylation is present at N602.

The protein belongs to the PheA/TfdB FAD monooxygenase family. Requires FAD as cofactor.

Its pathway is secondary metabolite biosynthesis. In terms of biological role, FAD-dependent monooxygenase; part of the gene cluster that mediates the biosynthesis of terrein, a fungal metabolite with ecological, antimicrobial, antiproliferative, and antioxidative activities. The first step in the pathway is performed by the polyketide synthase terA that produces 4-hydroxy-6-methylpyranon (4-HMP), orsellinic acid (OA), and 2,3-dehydro-6-hydroxymellein (2,3-dehydro-6-HM) by condensing acetyl-CoA with two, three, or four malonyl-CoA units, respectively. 4-HMP and OA are not pathway intermediates, but are rather shunt or side products. 2,3-dehydro-6-HM is further converted to 6-hydroxymellein (6-HM) by the 6-hydroxymellein synthase terB. The monooxygenases terC and terD, the multicopper oxidase terE and the Kelch-like protein terF are then involved in the transformation of 6-HM to terrein. Even if they are co-regulated with the other terrein cluster genes, terH and terI seem to be dispensable for terrein production; whereas one or both of the 2 transporters terG and terJ are probably required for efficient secretion of metabolites. The polypeptide is FAD-dependent monooxygenase terD (Aspergillus terreus (strain NIH 2624 / FGSC A1156)).